Reading from the N-terminus, the 652-residue chain is Leucine-rich repeat-containing protein 4 (652 aa).

An N-terminal signal peptide occupies residues 1-40 (MKLLWQVTVHHTWNAVLLPVVYLTAQVWILCAAIAAAASA). At 1-526 (MKLLWQVTVH…SLDEVMKTTK (526 aa)) the chain is on the extracellular side. The LRRNT domain occupies 41–74 (GPQNCPSVCSCSNQFSKVVCTRRGLSEVPQGIPS). 2 disulfides stabilise this stretch: Cys-45–Cys-51 and Cys-49–Cys-60. LRR repeat units follow at residues 75 to 96 (NTRY…TFRH), 99 to 120 (HLEV…AFNG), 123 to 144 (SLNT…AFEY), 147 to 168 (KLRE…AFNR), 171 to 193 (SLMR…AFEG), 196 to 217 (NLKY…TPLV), 218 to 239 (GLEE…SFHG), 242 to 263 (SLKK…AFDG), and 266 to 287 (SLVE…LFTP). Residues 299–351 (NPWNCDCDILWLAWWLREYIPTNSTCCGRCHAPMHMRGRYLVEVDQASFQCSA) form the LRRCT domain. Intrachain disulfides connect Cys-303-Cys-328 and Cys-305-Cys-349. Asn-321 and Asn-362 each carry an N-linked (GlcNAc...) asparagine glycan. The region spanning 352 to 441 (PFIMDAPRDL…SNASAYLNVS (90 aa)) is the Ig-like C2-type domain. Cys-373 and Cys-423 are joined by a disulfide. Residues 527–547 (IIIGCFVAVTLLAAAMLIVFY) form a helical membrane-spanning segment. Topologically, residues 548-652 (KLRKRHQQRS…TKDKVQETQI (105 aa)) are cytoplasmic.

As to quaternary structure, interacts (via LRR repeats) with NTNG2. Interacts with DLG4. Found in a complex with NMDA receptors. N-glycosylated. Mainly expressed in the brain. Expression is concentrated in the olfactory bulb, cortex, hippocampus and cerebellum in adult brain. Detected both embryonically and postnatally with stronger expression in postnatal stages.

It localises to the membrane. Its subcellular location is the postsynaptic cell membrane. Functionally, synaptic adhesion protein. Regulates the formation of exitatory synapses through the recruitment of pre-and-postsynaptic proteins. Organize the lamina/pathway-specific differentiation of dendrites. Plays an important role for auditory synaptic responses. Involved in the suppression of glioma. The protein is Leucine-rich repeat-containing protein 4 (Lrrc4) of Rattus norvegicus (Rat).